A 60-amino-acid polypeptide reads, in one-letter code: Single-pass membrane and coiled-coil domain-containing protein 4 homolog (60 aa).

The interval 1–23 (MRKLRGGQTKETRKQRQERKEEN) is disordered. A compositionally biased stretch (basic and acidic residues) spans 8 to 23 (QTKETRKQRQERKEEN). The stretch at 8–33 (QTKETRKQRQERKEENLKIQQQMKTI) forms a coiled coil. A helical membrane pass occupies residues 31-51 (KTIVLPTIGVIFLCIVVYVFL).

This sequence belongs to the SMCO4 family.

It is found in the membrane. The sequence is that of Single-pass membrane and coiled-coil domain-containing protein 4 homolog from Anopheles gambiae (African malaria mosquito).